We begin with the raw amino-acid sequence, 330 residues long: Putative heme-binding peroxidase (330 aa).

The active-site Proton acceptor is the His38. Residue His162 participates in heme b binding. Trp178 serves as the catalytic Tryptophan radical intermediate. Residues Gly286–Leu330 are disordered.

Belongs to the peroxidase family. Cytochrome c peroxidase subfamily. It depends on heme b as a cofactor.

Functionally, destroys radicals which are normally produced within the cells and which are toxic to biological systems. This is Putative heme-binding peroxidase (CCP2) from Mycosarcoma maydis (Corn smut fungus).